Here is an 835-residue protein sequence, read N- to C-terminus: Protein translocase subunit SecA (835 aa).

Residues Gln-85, Gly-103–Thr-107, and Asp-492 contribute to the ATP site. Cys-819, Cys-821, Cys-830, and Cys-831 together coordinate Zn(2+).

This sequence belongs to the SecA family. In terms of assembly, monomer and homodimer. Part of the essential Sec protein translocation apparatus which comprises SecA, SecYEG and auxiliary proteins SecDF. Other proteins may also be involved. Zn(2+) serves as cofactor.

It is found in the cell membrane. Its subcellular location is the cytoplasm. It catalyses the reaction ATP + H2O + cellular proteinSide 1 = ADP + phosphate + cellular proteinSide 2.. In terms of biological role, part of the Sec protein translocase complex. Interacts with the SecYEG preprotein conducting channel. Has a central role in coupling the hydrolysis of ATP to the transfer of proteins into and across the cell membrane, serving as an ATP-driven molecular motor driving the stepwise translocation of polypeptide chains across the membrane. The polypeptide is Protein translocase subunit SecA (Clostridium botulinum (strain Okra / Type B1)).